The primary structure comprises 204 residues: FMN-dependent NADH:quinone oxidoreductase 2 (204 aa).

FMN-binding positions include Ser10 and 16-18; that span reads SIS.

It belongs to the azoreductase type 1 family. As to quaternary structure, homodimer. The cofactor is FMN.

The catalysed reaction is 2 a quinone + NADH + H(+) = 2 a 1,4-benzosemiquinone + NAD(+). It carries out the reaction N,N-dimethyl-1,4-phenylenediamine + anthranilate + 2 NAD(+) = 2-(4-dimethylaminophenyl)diazenylbenzoate + 2 NADH + 2 H(+). Quinone reductase that provides resistance to thiol-specific stress caused by electrophilic quinones. Functionally, also exhibits azoreductase activity. Catalyzes the reductive cleavage of the azo bond in aromatic azo compounds to the corresponding amines. The protein is FMN-dependent NADH:quinone oxidoreductase 2 of Jannaschia sp. (strain CCS1).